Consider the following 465-residue polypeptide: Hydroxyacid-oxoacid transhydrogenase, mitochondrial (465 aa).

Lysine 443 is subject to N6-acetyllysine. Serine 450 carries the phosphoserine modification.

This sequence belongs to the iron-containing alcohol dehydrogenase family. Hydroxyacid-oxoacid transhydrogenase subfamily. In terms of tissue distribution, expressed in white and brown adipose tissues, liver, and kidney. Expression is differentiation-dependent during in vitro brown and white adipogenesis.

It localises to the mitochondrion. It catalyses the reaction (S)-3-hydroxybutanoate + 2-oxoglutarate = (R)-2-hydroxyglutarate + acetoacetate. The enzyme catalyses 4-hydroxybutanoate + 2-oxoglutarate = (R)-2-hydroxyglutarate + succinate semialdehyde. Catalyzes the cofactor-independent reversible oxidation of gamma-hydroxybutyrate (GHB) to succinic semialdehyde (SSA) coupled to reduction of 2-ketoglutarate (2-KG) to D-2-hydroxyglutarate (D-2-HG). L-3-hydroxybutyrate (L-3-OHB) is also a substrate for HOT when using 2-KG as hydrogen acceptor, resulting in the formation of D-2-HG. The chain is Hydroxyacid-oxoacid transhydrogenase, mitochondrial (Adhfe1) from Mus musculus (Mouse).